A 148-amino-acid chain; its full sequence is Holo-[acyl-carrier-protein] synthase (148 aa).

Mg(2+) is bound by residues D8 and E57.

It belongs to the P-Pant transferase superfamily. AcpS family. Mg(2+) is required as a cofactor.

The protein resides in the cytoplasm. It carries out the reaction apo-[ACP] + CoA = holo-[ACP] + adenosine 3',5'-bisphosphate + H(+). Transfers the 4'-phosphopantetheine moiety from coenzyme A to a Ser of acyl-carrier-protein. The protein is Holo-[acyl-carrier-protein] synthase of Ruegeria pomeroyi (strain ATCC 700808 / DSM 15171 / DSS-3) (Silicibacter pomeroyi).